Consider the following 563-residue polypeptide: MAMITGGELVVRTLIKAGVEHLFGLHGAHIDTIFQACLDHDVPIIDTRHEAAAGHAAEGYARAGAKLGVAGHGGRGIYQCGHAHCQRLAGSQGRCIPHPGSGALRDDETNTLQAGIDQVAMAAPITKWAHRVMATEHIPRLVMQAIRAALSAPRGPVLLDLPWDILMNQIDEDSVIIPDLVLSAHGARPDPADLDQALALLRKAERPVIVLGSEASRTARKTALSAFVAATGVPVFADYEGLSMLSGLPDAMRGGLVQNLYSFAKADAAPDLVLMLGARFGLNTGHGSGQLIPHSAQVIQVDPDACELGRLQGIALGIVADVGGTIEALAQATAQDAAWPDRGDWCAKVTDLAQERYASIAAKSSSEHALHPFHASQVIAKHVDAGVTVVADGALTYLWLSEVMSRVKPGGFLCHGYLGSMGVGFGTALGAQVADLEAGRRTILVTGDGSVGYSIGEFDTLVRKQLPLIVIIMNNQSWGATLHFQQLAVGPNRVTGTRLENGSYHGVAAAFGADGYHVDSVESFSAALAQALAHNRPACINVAVALDPIPPEELILIGMDPFA.

The protein belongs to the TPP enzyme family. The cofactor is a metal cation. Thiamine diphosphate serves as cofactor.

The enzyme catalyses benzoin = 2 benzaldehyde. Its function is as follows. Cleavage of benzoin-anisoin acyloin linkage. This chain is Benzaldehyde lyase (bznB), found in Pseudomonas fluorescens.